A 360-amino-acid chain; its full sequence is Protein Wnt-2 (360 aa).

The N-terminal stretch at 1-25 (MNAPLGGIWLWLPLLLTWLTPEVNS) is a signal peptide. 11 disulfide bridges follow: cysteine 76-cysteine 87, cysteine 127-cysteine 135, cysteine 137-cysteine 157, cysteine 206-cysteine 220, cysteine 208-cysteine 215, cysteine 278-cysteine 309, cysteine 294-cysteine 304, cysteine 308-cysteine 348, cysteine 324-cysteine 339, cysteine 326-cysteine 336, and cysteine 331-cysteine 332. The O-palmitoleoyl serine; by PORCN moiety is linked to residue serine 212. Asparagine 295 is a glycosylation site (N-linked (GlcNAc...) asparagine).

It belongs to the Wnt family. In terms of processing, palmitoleoylation is required for efficient binding to frizzled receptors. Depalmitoleoylation leads to Wnt signaling pathway inhibition. In terms of tissue distribution, expressed in brain in the thalamus, in fetal and adult lung and in placenta.

Its subcellular location is the secreted. The protein localises to the extracellular space. It localises to the extracellular matrix. Its function is as follows. Ligand for members of the frizzled family of seven transmembrane receptors. Functions in the canonical Wnt signaling pathway that results in activation of transcription factors of the TCF/LEF family. Functions as a upstream regulator of FGF10 expression. Plays an important role in embryonic lung development. May contribute to embryonic brain development by regulating the proliferation of dopaminergic precursors and neurons. This chain is Protein Wnt-2 (WNT2), found in Homo sapiens (Human).